A 670-amino-acid chain; its full sequence is UvrABC system protein B (670 aa).

Residues N28–I414 form the Helicase ATP-binding domain. G41–T48 provides a ligand contact to ATP. The short motif at Y94 to I117 is the Beta-hairpin element. One can recognise a Helicase C-terminal domain in the interval Q432–I594. Positions N631–K666 constitute a UVR domain.

Belongs to the UvrB family. As to quaternary structure, forms a heterotetramer with UvrA during the search for lesions. Interacts with UvrC in an incision complex.

It localises to the cytoplasm. In terms of biological role, the UvrABC repair system catalyzes the recognition and processing of DNA lesions. A damage recognition complex composed of 2 UvrA and 2 UvrB subunits scans DNA for abnormalities. Upon binding of the UvrA(2)B(2) complex to a putative damaged site, the DNA wraps around one UvrB monomer. DNA wrap is dependent on ATP binding by UvrB and probably causes local melting of the DNA helix, facilitating insertion of UvrB beta-hairpin between the DNA strands. Then UvrB probes one DNA strand for the presence of a lesion. If a lesion is found the UvrA subunits dissociate and the UvrB-DNA preincision complex is formed. This complex is subsequently bound by UvrC and the second UvrB is released. If no lesion is found, the DNA wraps around the other UvrB subunit that will check the other stand for damage. This chain is UvrABC system protein B, found in Onion yellows phytoplasma (strain OY-M).